Here is a 384-residue protein sequence, read N- to C-terminus: Galactokinase (384 aa).

E35–D38 is a binding site for substrate. Residues S69 and G125–S131 contribute to the ATP site. The Mg(2+) site is built by S131 and E163. The active-site Proton acceptor is D175. A substrate-binding site is contributed by Y224.

The protein belongs to the GHMP kinase family. GalK subfamily.

The protein localises to the cytoplasm. It catalyses the reaction alpha-D-galactose + ATP = alpha-D-galactose 1-phosphate + ADP + H(+). It participates in carbohydrate metabolism; galactose metabolism. Catalyzes the transfer of the gamma-phosphate of ATP to D-galactose to form alpha-D-galactose-1-phosphate (Gal-1-P). In Aliivibrio fischeri (strain MJ11) (Vibrio fischeri), this protein is Galactokinase.